Consider the following 687-residue polypeptide: Hemin receptor (687 aa).

The first 28 residues, 1–28 (MPRSTSDRFRWSPLSLAIACTLSLAVQA), serve as a signal peptide directing secretion. The TonB box signature appears at 44–51 (DTMVVTAT). The region spanning 56 to 167 (SSFEAPMMVT…LGGVISYETV (112 aa)) is the TBDR plug domain. Residues 178-687 (NSGYRVYSAA…NAKFFVSYQW (510 aa)) enclose the TBDR beta-barrel domain. The disordered stretch occupies residues 319–338 (ARPQGTPEEGRKQTTKGGKL). Residues 326–338 (EEGRKQTTKGGKL) show a composition bias toward basic and acidic residues. Residues 670 to 687 (QGVPQDGRNAKFFVSYQW) carry the TonB C-terminal box motif.

It belongs to the TonB-dependent receptor family.

Its subcellular location is the cell outer membrane. In terms of biological role, this protein is involved in the initial step of iron uptake by binding hemin, an iron chelatin siderophore that allows the bacteria to extract iron from the environment. The polypeptide is Hemin receptor (hemR) (Yersinia enterocolitica).